The following is a 371-amino-acid chain: 3-isopropylmalate dehydrogenase (371 aa).

Phosphothreonine is present on threonine 55. Residue 78-89 (GPEWTNPNCRPE) coordinates NAD(+). 4 residues coordinate substrate: arginine 96, arginine 106, arginine 135, and aspartate 224. Positions 224, 249, and 253 each coordinate Mg(2+). An NAD(+)-binding site is contributed by 290–302 (GSAPDIAGKGIVN).

The protein belongs to the isocitrate and isopropylmalate dehydrogenases family. As to quaternary structure, homodimer. Requires Mg(2+) as cofactor. Mn(2+) serves as cofactor.

It localises to the cytoplasm. It carries out the reaction (2R,3S)-3-isopropylmalate + NAD(+) = 4-methyl-2-oxopentanoate + CO2 + NADH. Its pathway is amino-acid biosynthesis; L-leucine biosynthesis; L-leucine from 3-methyl-2-oxobutanoate: step 3/4. Functionally, catalyzes the oxidation of 3-carboxy-2-hydroxy-4-methylpentanoate (3-isopropylmalate) to 3-carboxy-4-methyl-2-oxopentanoate. The product decarboxylates to 4-methyl-2 oxopentanoate. The sequence is that of 3-isopropylmalate dehydrogenase (leu1) from Schizosaccharomyces pombe (strain 972 / ATCC 24843) (Fission yeast).